Consider the following 982-residue polypeptide: Filament-like plant protein 4 (982 aa).

Coiled coils occupy residues 39–83 (DQYT…VAKE) and 125–291 (EDRA…RKKL). The disordered stretch occupies residues 311–333 (DHRQDHRQRRSPVRPSSPLMSPM). Low complexity predominate over residues 323–333 (VRPSSPLMSPM). Residues 345–401 (DNMQKFHKENDLLTERLLAMEEETKMLKEALAKRNSELQVSRNLCAKTANRLQTLEA) adopt a coiled-coil conformation. Residues 423-433 (QNASNPPSMAS) are compositionally biased toward polar residues. Disordered regions lie at residues 423–466 (QNAS…AKIK) and 687–711 (QKDS…PDDC). The stretch at 452 to 475 (ELSQSNKDKANAKIKKTESANQLE) forms a coiled coil. Residues 457–466 (NKDKANAKIK) show a composition bias toward basic and acidic residues. Polar residues predominate over residues 693–705 (EHYQNGCSQSSDS). Residues 722 to 885 (ATCKFTTEEF…AECQETILLL (164 aa)) adopt a coiled-coil conformation. 2 stretches are compositionally biased toward polar residues: residues 896–910 (TEQV…QQAL) and 918–943 (ATST…NTMK). The disordered stretch occupies residues 896–982 (TEQVASSPSQ…FSRFFSTKAK (87 aa)).

Belongs to the FPP family. In terms of assembly, interacts with WPP/MAF proteins.

This is Filament-like plant protein 4 (FPP4) from Arabidopsis thaliana (Mouse-ear cress).